The chain runs to 310 residues: MFADLIPRLRDAMPELRGELQTNVPLAPWTWFKTGGPAQCVYVAPDVEDLAYFLGNLDPDISIFVLGLGSNILVRDGGIEGVVISFGPSFHKIVIEGDTISAGAAVADVKLASAAAMAGLGGFAFLRGIPGTIGGALRMNAGAFGGTIADILVSCEGLDRRGALHHFTPEEMGFSYRHCAVEGIIFTQGLFAGWPENPEKIREDMGKIAQERAKTQPVNTRTGGSTFKNPNGAKAWELIDRAGCRGLTLGDAQVSELHCNFLVNRGKASAADIENLGEMVRQKVLAETGVELEWEILRVGRPPVAHKTSR.

The region spanning T34–E211 is the FAD-binding PCMH-type domain. R177 is a catalytic residue. S225 serves as the catalytic Proton donor. Residue E295 is part of the active site.

This sequence belongs to the MurB family. FAD serves as cofactor.

It localises to the cytoplasm. The enzyme catalyses UDP-N-acetyl-alpha-D-muramate + NADP(+) = UDP-N-acetyl-3-O-(1-carboxyvinyl)-alpha-D-glucosamine + NADPH + H(+). The protein operates within cell wall biogenesis; peptidoglycan biosynthesis. Cell wall formation. This Beijerinckia indica subsp. indica (strain ATCC 9039 / DSM 1715 / NCIMB 8712) protein is UDP-N-acetylenolpyruvoylglucosamine reductase.